The primary structure comprises 370 residues: Putative F-box protein At1g46984 (370 aa).

The 47-residue stretch at 18–64 folds into the F-box domain; the sequence is YTQLSTLPIDLIIEILSRLPMNSIAICRLVSKQWASILQSSDFTESF.

This is Putative F-box protein At1g46984 from Arabidopsis thaliana (Mouse-ear cress).